A 386-amino-acid chain; its full sequence is Flap endonuclease 1 (386 aa).

The tract at residues 1–104 (MGILGLSKLI…GELAKRAERR (104 aa)) is N-domain. D34 is a binding site for Mg(2+). R47 and R70 together coordinate DNA. The Mg(2+) site is built by D86, E158, E160, D179, and D181. Residues 122-253 (EIEKFNRRLV…KRAIELINNY (132 aa)) form an I-domain region. E158 contacts DNA. DNA contacts are provided by G231 and D233. Residue D233 participates in Mg(2+) binding. The interaction with PCNA stretch occupies residues 336–344 (TQVRLDSFF). Residues 354–386 (VNAAKRKAEEAKKSANNKKAKTSGGAARGRRPK) are disordered.

This sequence belongs to the XPG/RAD2 endonuclease family. FEN1 subfamily. As to quaternary structure, interacts with PCNA. Three molecules of FEN1 bind to one PCNA trimer with each molecule binding to one PCNA monomer. PCNA stimulates the nuclease activity without altering cleavage specificity. Requires Mg(2+) as cofactor. Post-translationally, phosphorylated. Phosphorylation upon DNA damage induces relocalization to the nuclear plasma.

It is found in the nucleus. Its subcellular location is the nucleolus. The protein localises to the nucleoplasm. The protein resides in the mitochondrion. Its function is as follows. Structure-specific nuclease with 5'-flap endonuclease and 5'-3' exonuclease activities involved in DNA replication and repair. During DNA replication, cleaves the 5'-overhanging flap structure that is generated by displacement synthesis when DNA polymerase encounters the 5'-end of a downstream Okazaki fragment. It enters the flap from the 5'-end and then tracks to cleave the flap base, leaving a nick for ligation. Also involved in the long patch base excision repair (LP-BER) pathway, by cleaving within the apurinic/apyrimidinic (AP) site-terminated flap. Acts as a genome stabilization factor that prevents flaps from equilibrating into structures that lead to duplications and deletions. Also possesses 5'-3' exonuclease activity on nicked or gapped double-stranded DNA, and exhibits RNase H activity. Also involved in replication and repair of rDNA and in repairing mitochondrial DNA. This Drosophila pseudoobscura pseudoobscura (Fruit fly) protein is Flap endonuclease 1.